Here is a 339-residue protein sequence, read N- to C-terminus: Phenylalanine--tRNA ligase alpha subunit (339 aa).

Glutamate 250 provides a ligand contact to Mg(2+).

This sequence belongs to the class-II aminoacyl-tRNA synthetase family. Phe-tRNA synthetase alpha subunit type 1 subfamily. As to quaternary structure, tetramer of two alpha and two beta subunits. It depends on Mg(2+) as a cofactor.

It localises to the cytoplasm. It catalyses the reaction tRNA(Phe) + L-phenylalanine + ATP = L-phenylalanyl-tRNA(Phe) + AMP + diphosphate + H(+). This Parabacteroides distasonis (strain ATCC 8503 / DSM 20701 / CIP 104284 / JCM 5825 / NCTC 11152) protein is Phenylalanine--tRNA ligase alpha subunit.